A 156-amino-acid polypeptide reads, in one-letter code: Small ribosomal subunit protein uS7 (156 aa).

Belongs to the universal ribosomal protein uS7 family. Part of the 30S ribosomal subunit. Contacts proteins S9 and S11.

In terms of biological role, one of the primary rRNA binding proteins, it binds directly to 16S rRNA where it nucleates assembly of the head domain of the 30S subunit. Is located at the subunit interface close to the decoding center, probably blocks exit of the E-site tRNA. The protein is Small ribosomal subunit protein uS7 of Synechococcus sp. (strain JA-2-3B'a(2-13)) (Cyanobacteria bacterium Yellowstone B-Prime).